The primary structure comprises 396 residues: Elongation factor Tu (396 aa).

The tr-type G domain maps to 10–206; it reads KPHVNVGTIG…ALDDYIPEPE (197 aa). The segment at 19–26 is G1; it reads GHVDHGKT. Position 19–26 (19–26) interacts with GTP; it reads GHVDHGKT. Thr26 serves as a coordination point for Mg(2+). Residues 60-64 form a G2 region; the sequence is GITIA. A G3 region spans residues 81–84; that stretch reads DCPG. Residues 81-85 and 136-139 each bind GTP; these read DCPGH and NKAD. Residues 136-139 are G4; the sequence is NKAD. Residues 174–176 are G5; that stretch reads SAL.

It belongs to the TRAFAC class translation factor GTPase superfamily. Classic translation factor GTPase family. EF-Tu/EF-1A subfamily. As to quaternary structure, monomer.

The protein localises to the cytoplasm. The catalysed reaction is GTP + H2O = GDP + phosphate + H(+). In terms of biological role, GTP hydrolase that promotes the GTP-dependent binding of aminoacyl-tRNA to the A-site of ribosomes during protein biosynthesis. This Methylococcus capsulatus (strain ATCC 33009 / NCIMB 11132 / Bath) protein is Elongation factor Tu.